We begin with the raw amino-acid sequence, 88 residues long: Putative membrane protein insertion efficiency factor (88 aa).

The disordered stretch occupies residues 64-88 (GVDPVPKKSSSKKTSSTTACGCGHS).

This sequence belongs to the UPF0161 family.

Its subcellular location is the cell inner membrane. Could be involved in insertion of integral membrane proteins into the membrane. This Herminiimonas arsenicoxydans protein is Putative membrane protein insertion efficiency factor.